The sequence spans 473 residues: Siroheme synthase (473 aa).

A precorrin-2 dehydrogenase /sirohydrochlorin ferrochelatase region spans residues 1 to 203 (MTLFPIFADL…QQPGLAEQEL (203 aa)). NAD(+) contacts are provided by residues 22–23 (AV) and 43–44 (PR). Ser128 carries the post-translational modification Phosphoserine. The tract at residues 216-473 (GSVVLVGAGP…GLPGPQALAA (258 aa)) is uroporphyrinogen-III C-methyltransferase. Pro225 contacts S-adenosyl-L-methionine. The Proton acceptor role is filled by Asp248. Lys270 serves as the catalytic Proton donor. S-adenosyl-L-methionine-binding positions include 302–304 (GGD), Ile307, 332–333 (TA), Met384, and Gly413.

This sequence in the N-terminal section; belongs to the precorrin-2 dehydrogenase / sirohydrochlorin ferrochelatase family. In the C-terminal section; belongs to the precorrin methyltransferase family.

The enzyme catalyses uroporphyrinogen III + 2 S-adenosyl-L-methionine = precorrin-2 + 2 S-adenosyl-L-homocysteine + H(+). It carries out the reaction precorrin-2 + NAD(+) = sirohydrochlorin + NADH + 2 H(+). The catalysed reaction is siroheme + 2 H(+) = sirohydrochlorin + Fe(2+). It participates in cofactor biosynthesis; adenosylcobalamin biosynthesis; precorrin-2 from uroporphyrinogen III: step 1/1. Its pathway is cofactor biosynthesis; adenosylcobalamin biosynthesis; sirohydrochlorin from precorrin-2: step 1/1. The protein operates within porphyrin-containing compound metabolism; siroheme biosynthesis; precorrin-2 from uroporphyrinogen III: step 1/1. It functions in the pathway porphyrin-containing compound metabolism; siroheme biosynthesis; siroheme from sirohydrochlorin: step 1/1. It participates in porphyrin-containing compound metabolism; siroheme biosynthesis; sirohydrochlorin from precorrin-2: step 1/1. In terms of biological role, multifunctional enzyme that catalyzes the SAM-dependent methylations of uroporphyrinogen III at position C-2 and C-7 to form precorrin-2 via precorrin-1. Then it catalyzes the NAD-dependent ring dehydrogenation of precorrin-2 to yield sirohydrochlorin. Finally, it catalyzes the ferrochelation of sirohydrochlorin to yield siroheme. In Bordetella parapertussis (strain 12822 / ATCC BAA-587 / NCTC 13253), this protein is Siroheme synthase.